Reading from the N-terminus, the 209-residue chain is Dual specificity phosphatase 29 (209 aa).

In terms of domain architecture, Tyrosine-protein phosphatase spans histidine 45–leucine 193. Asparagine 137 to arginine 144 serves as a coordination point for substrate. The Phosphocysteine intermediate role is filled by cysteine 138.

It belongs to the protein-tyrosine phosphatase family. Non-receptor class dual specificity subfamily.

The protein localises to the cytoplasm. Its subcellular location is the nucleus. It carries out the reaction O-phospho-L-tyrosyl-[protein] + H2O = L-tyrosyl-[protein] + phosphate. It catalyses the reaction O-phospho-L-seryl-[protein] + H2O = L-seryl-[protein] + phosphate. The catalysed reaction is O-phospho-L-threonyl-[protein] + H2O = L-threonyl-[protein] + phosphate. Functionally, dual specificity phosphatase able to dephosphorylate phosphotyrosine, phosphoserine and phosphothreonine residues, with a preference for phosphotyrosine as a substrate. In terms of biological role, dual specificity phosphatase able to dephosphorylate phosphotyrosine, phosphoserine and phosphothreonine residues within the same substrate, with a preference for phosphotyrosine as a substrate. Involved in the modulation of AMPK and MAPK1/2 signaling pathway. This Xenopus laevis (African clawed frog) protein is Dual specificity phosphatase 29 (dusp29).